The following is a 452-amino-acid chain: Mitochondrial import inner membrane translocase subunit TIM44 (452 aa).

Thr-128 is subject to Phosphothreonine. Position 166 to 173 (166 to 173 (SGEKLGKT)) interacts with ATP. An N6-succinyllysine modification is found at Lys-177. Ser-180 carries the phosphoserine modification. The residue at position 217 (Lys-217) is an N6-succinyllysine.

It belongs to the Tim44 family. In terms of assembly, probable component of the PAM complex at least composed of a mitochondrial HSP70 protein, GRPEL1 or GRPEL2, TIMM44, TIMM16/PAM16 and TIMM14/DNAJC19. The complex interacts with the TIMM23 component of the TIM23 complex. Interacts with SLC25A4/ANT1 and SLC25A5/ANT2; leading to inhibit the presequence translocase TIMM23, thereby promoting stabilization of PINK1.

Its subcellular location is the mitochondrion inner membrane. Its function is as follows. Essential component of the PAM complex, a complex required for the translocation of transit peptide-containing proteins from the inner membrane into the mitochondrial matrix in an ATP-dependent manner. Recruits mitochondrial HSP70 to drive protein translocation into the matrix using ATP as an energy source. This is Mitochondrial import inner membrane translocase subunit TIM44 (Timm44) from Mus musculus (Mouse).